Consider the following 366-residue polypeptide: Tetraacyldisaccharide 4'-kinase (366 aa).

51 to 58 is an ATP binding site; sequence TVGGTGKT.

Belongs to the LpxK family.

It carries out the reaction a lipid A disaccharide + ATP = a lipid IVA + ADP + H(+). It participates in glycolipid biosynthesis; lipid IV(A) biosynthesis; lipid IV(A) from (3R)-3-hydroxytetradecanoyl-[acyl-carrier-protein] and UDP-N-acetyl-alpha-D-glucosamine: step 6/6. Transfers the gamma-phosphate of ATP to the 4'-position of a tetraacyldisaccharide 1-phosphate intermediate (termed DS-1-P) to form tetraacyldisaccharide 1,4'-bis-phosphate (lipid IVA). The protein is Tetraacyldisaccharide 4'-kinase of Phocaeicola vulgatus (strain ATCC 8482 / DSM 1447 / JCM 5826 / CCUG 4940 / NBRC 14291 / NCTC 11154) (Bacteroides vulgatus).